The chain runs to 351 residues: uncharacterized protein (351 aa).

The segment at 1–61 (MNDKRKPSFQ…RDKQEVKETR (61 aa)) is disordered. Composition is skewed to basic and acidic residues over residues 16–38 (FQER…HFND) and 44–61 (RNEK…KETR).

The protein belongs to the class IV-like SAM-binding methyltransferase superfamily. RNA methyltransferase TrmH family.

This is an uncharacterized protein from Haemophilus influenzae (strain ATCC 51907 / DSM 11121 / KW20 / Rd).